A 224-amino-acid chain; its full sequence is Protein-L-isoaspartate O-methyltransferase (224 aa).

Ser-70 is a catalytic residue.

This sequence belongs to the methyltransferase superfamily. L-isoaspartyl/D-aspartyl protein methyltransferase family.

It is found in the cytoplasm. It carries out the reaction [protein]-L-isoaspartate + S-adenosyl-L-methionine = [protein]-L-isoaspartate alpha-methyl ester + S-adenosyl-L-homocysteine. Its function is as follows. Catalyzes the methyl esterification of L-isoaspartyl residues in peptides and proteins that result from spontaneous decomposition of normal L-aspartyl and L-asparaginyl residues. It plays a role in the repair and/or degradation of damaged proteins. This is Protein-L-isoaspartate O-methyltransferase from Cellvibrio japonicus (strain Ueda107) (Pseudomonas fluorescens subsp. cellulosa).